Here is a 463-residue protein sequence, read N- to C-terminus: Glutamate--tRNA ligase 1 (463 aa).

The 'HIGH' region motif lies at 10-20 (PSPTGYLHIGG). The 'KMSKS' region signature appears at 238–242 (KLSKR). Lysine 241 is an ATP binding site.

This sequence belongs to the class-I aminoacyl-tRNA synthetase family. Glutamate--tRNA ligase type 1 subfamily. As to quaternary structure, monomer.

It is found in the cytoplasm. The catalysed reaction is tRNA(Glu) + L-glutamate + ATP = L-glutamyl-tRNA(Glu) + AMP + diphosphate. In terms of biological role, catalyzes the attachment of glutamate to tRNA(Glu) in a two-step reaction: glutamate is first activated by ATP to form Glu-AMP and then transferred to the acceptor end of tRNA(Glu). The sequence is that of Glutamate--tRNA ligase 1 from Helicobacter pylori (strain G27).